The sequence spans 913 residues: Calcium-activated chloride channel regulator 1 (913 aa).

A signal peptide spans 1–21 (MGPFKSSVFILILHLLEGALS). The tract at residues 46 to 199 (DETLIQQIKD…GITGKIEVNK (154 aa)) is metalloprotease domain. His-156 serves as a coordination point for Zn(2+). Glu-157 is a catalytic residue. Zn(2+) contacts are provided by His-160 and Asp-167. Positions 306–475 (IVCLVLDKSG…NGLIDAFGAL (170 aa)) constitute a VWFA domain. N-linked (GlcNAc...) asparagine glycans are attached at residues Asn-503, Asn-769, Asn-803, Asn-809, Asn-830, Asn-835, Asn-885, and Asn-889. Residues 866–885 (PPQTPPETPSPDETSAPCPN) form a disordered region.

This sequence belongs to the CLCR family. Post-translationally, glycosylated. In terms of processing, the translation product is autoproteolytically cleaved by the metalloprotease domain in the endoplasmic reticulum into a N-terminal and a C-terminal products that remain physically associated with each other. The cleavage is necessary for calcium-activated chloride channel (CaCC) activation activity.

The protein resides in the secreted. The protein localises to the extracellular space. In terms of biological role, may be involved in mediating calcium-activated chloride conductance. May play critical roles in goblet cell metaplasia, mucus hypersecretion, cystic fibrosis and AHR. May be involved in the regulation of mucus production and/or secretion by goblet cells. Involved in the regulation of tissue inflammation in the innate immune response. May play a role as a tumor suppressor. Induces MUC5AC. In Macaca mulatta (Rhesus macaque), this protein is Calcium-activated chloride channel regulator 1 (CLCA1).